A 1776-amino-acid chain; its full sequence is Signal-induced proliferation-associated 1-like protein 3 (1776 aa).

Disordered stretches follow at residues 41–157 (AQNG…GRAF) and 240–325 (PGAL…EASR). Over residues 54–69 (PAATTTRPSPTTPAMP) the composition is skewed to low complexity. Polar residues-rich tracts occupy residues 89 to 99 (EQSNPSPSQDT) and 112 to 129 (RNLQNGQLPSSTPASSGS). Position 94 is a phosphoserine (Ser-94). A compositionally biased stretch (basic residues) spans 131-140 (AFHRLSRRRS). A Phosphoserine modification is found at Ser-140. The span at 257-268 (GQPTKDSLQSLQ) shows a compositional bias: polar residues. Ser-394 is modified (phosphoserine). Residues 438-461 (SRASVGSPGGSSEAHMAEPTLSTH) are disordered. The 218-residue stretch at 605 to 822 (LLKLDEQGLC…RTRQEYLKDL (218 aa)) folds into the Rap-GAP domain. The region spanning 960–1024 (DMTLRRNGLG…DQMIDLLRTS (65 aa)) is the PDZ domain. Disordered stretches follow at residues 1040-1104 (PRRG…AQSL), 1117-1164 (RESQ…ATYA), and 1184-1632 (DPHF…LDPG). Polar residues-rich tracts occupy residues 1074 to 1104 (APWQWSGPASHNSLPATKWTTPATPGHAQSL) and 1151 to 1160 (PSGSFSTPGS). Residues 1190–1201 (DGMSSGDSSSGG) show a composition bias toward low complexity. Residues 1239-1255 (SRQDAAGKDSPNRHSKG) are compositionally biased toward basic and acidic residues. A compositionally biased stretch (low complexity) spans 1260–1275 (SSHSSSNTLSSNASSS). Residues 1298 to 1316 (GGSSDSGIDTTLYTSSPSC) are compositionally biased toward polar residues. The span at 1344 to 1357 (SAGRPHPVDRRREV) shows a compositional bias: basic and acidic residues. Ser-1358 carries the post-translational modification Phosphoserine. Residue Thr-1381 is modified to Phosphothreonine. Residues 1409-1436 (VYKTASAETPRPSQLSQCSPFQLSTSVP) are compositionally biased toward polar residues. Lys-1442 carries the N6-acetyllysine modification. The segment covering 1503 to 1512 (TIEDDLKKLI) has biased composition (basic and acidic residues). 2 stretches are compositionally biased toward polar residues: residues 1526–1541 (GQSPQKSLQRTLSDES) and 1566–1578 (LFTSTCTFPSSTL). Residues Ser-1538 and Ser-1541 each carry the phosphoserine modification. Residues 1589–1601 (PPSGAPSTTPATG) are compositionally biased toward low complexity. Phosphoserine occurs at positions 1614 and 1617. Positions 1620–1630 (DGRDRPLRRLD) are enriched in basic and acidic residues. Ser-1672 bears the Phosphoserine mark. A disordered region spans residues 1678–1705 (AHSPVHSHLSLERGPQTPRATPTMSEES). A phosphothreonine mark is found at Thr-1694 and Thr-1698. Positions 1715–1769 (QLEVMLKQLHTDLQKEKQDKVVLQSEVASLRQNNQRLQEESQAASEQLRKFAELF) form a coiled coil.

It localises to the apical cell membrane. Plays a critical role in epithelial cell morphogenesis, polarity, adhesion and cytoskeletal organization in the lens. In Mus musculus (Mouse), this protein is Signal-induced proliferation-associated 1-like protein 3 (Sipa1l3).